We begin with the raw amino-acid sequence, 478 residues long: Chromosomal replication initiator protein DnaA (478 aa).

Positions 1-82 (MHTMNKTAES…ELGKNAKLLY (82 aa)) are domain I, interacts with DnaA modulators. The segment at 82 to 140 (YKIKMENTYGNKLPFTEQLPSAHRSPVRTQEIDVPVQQKNPELRNPFIIPGIRNLKIES) is domain II. Residues 141 to 358 (QLNANYSFDN…GAIISLIAQS (218 aa)) are domain III, AAA+ region. ATP contacts are provided by Gly-186, Gly-188, Lys-189, and Thr-190. Residues 359–478 (SFNKKEVTLE…VDDINKKLSL (120 aa)) form a domain IV, binds dsDNA region.

This sequence belongs to the DnaA family. Oligomerizes as a right-handed, spiral filament on DNA at oriC.

It is found in the cytoplasm. Its function is as follows. Plays an essential role in the initiation and regulation of chromosomal replication. ATP-DnaA binds to the origin of replication (oriC) to initiate formation of the DNA replication initiation complex once per cell cycle. Binds the DnaA box (a 9 base pair repeat at the origin) and separates the double-stranded (ds)DNA. Forms a right-handed helical filament on oriC DNA; dsDNA binds to the exterior of the filament while single-stranded (ss)DNA is stabiized in the filament's interior. The ATP-DnaA-oriC complex binds and stabilizes one strand of the AT-rich DNA unwinding element (DUE), permitting loading of DNA polymerase. After initiation quickly degrades to an ADP-DnaA complex that is not apt for DNA replication. Binds acidic phospholipids. The polypeptide is Chromosomal replication initiator protein DnaA (Flavobacterium psychrophilum (strain ATCC 49511 / DSM 21280 / CIP 103535 / JIP02/86)).